Here is a 575-residue protein sequence, read N- to C-terminus: MFGIQDTLGRGPTLKEKSLGAEMDSVRSWVRNVGVVDANVAAQSGVALSRAHFEKQPPSNLRKSNFFHFVLALYDRQGQPVEIERTAFVDFVENDKEQGNEKTNNGTHYKLQLLYSNGVRTEQDLYVRLIDSVTKQPIAYEGQNKNPEMCRVLLTHEVMCSRCCEKKSCGNRNETPSDPVIIDRFFLKFFLKCNQNCLKTAGNPRDMRRFQVVLSTTVNVDGHVLAVSDNMFVHNNSKHGRRARRLDPSEATPCIKAISPSEGWTTGGAMVIIIGDNFFDGLQVVFGTMLVWSELITPHAIRVQTPPRHIPGVVEVTLSYKSKQFCKGAPGRFIYTALNEPTIDYGFQRLQKVIPRHPGDPERLAKEMLLKRAADLVEALYGTPHNNQDIILKRAADIAEALYSVPRNPSQLPALSSSPAHSGMMGINSYGSQLGVSISESTQGNNQGYIRNTSSISPRGYSSSSTPQQSNYSTSSNSMNGYSNVPMANLGVPGSPGFLNGSPTGSPYGIMSSSPTVGSSSTSSILPFSSSVFPAVKQKSAFAPVIRPQGSPSPACSSGNGNGFRAMTGLVVPPM.

Residues R62 to N65 form an interaction with DNA region. The C5-type zinc-finger motif lies at C150 to C169. Interaction with DNA regions lie at residues N196–N203 and N235–K238. Residues P253–T336 enclose the IPT/TIG domain. The span at S441–T453 shows a compositional bias: polar residues. The segment at S441 to M479 is disordered. Low complexity predominate over residues S454–M479.

It belongs to the COE family. As to quaternary structure, forms either a homodimer or a heterodimer with a related family member. Interacts with SIX1.

It is found in the nucleus. In terms of biological role, transcription factor that, in osteoblasts, activates the decoy receptor for RANKL, TNFRSF11B, which in turn regulates osteoclast differentiation. Acts in synergy with the Wnt-responsive LEF1/CTNNB1 pathway. Recognizes variations of the palindromic sequence 5'-ATTCCCNNGGGAATT-3'. The chain is Transcription factor COE2 (EBF2) from Homo sapiens (Human).